Reading from the N-terminus, the 295-residue chain is Guided entry of tail-anchored proteins factor CAMLG (295 aa).

2 disordered regions span residues 1-73 (MEPM…ILNP) and 127-148 (GVELRQRNRGDLTADSAPRGSH). Residues 1–188 (MEPMPSATDG…RTTEEFDSFR (188 aa)) are Cytoplasmic-facing. Over residues 15 to 24 (ATPSGLSASQ) the composition is skewed to polar residues. S53 carries the post-translational modification Phosphoserine. The segment covering 127 to 138 (GVELRQRNRGDL) has biased composition (basic and acidic residues). A helical transmembrane segment spans residues 189 to 206 (IFRLVGCALLALVVRAFV). Residues 207 to 208 (CK) lie on the Lumenal side of the membrane. A disulfide bond links C207 and C283. A helical membrane pass occupies residues 209 to 227 (YLSIFAPFLTLQLAYMGLY). Topologically, residues 228 to 268 (KYFPKGEKKVKTTVLTAALLLSGIPAEVINRSMDTYSKMGE) are cytoplasmic. A helical membrane pass occupies residues 269–287 (VFTDLCVYFFTFIFCHEVL). Residues 288–295 (EYWGPEVP) lie on the Lumenal side of the membrane.

Component of the Golgi to ER traffic (GET) complex, which is composed of GET1/WRB, CAMLG/GET2 and GET3/TRC40. Within the complex, GET1 and CAMLG form a heterotetramer which is stabilized by phosphatidylinositol binding and which binds to the GET3 homodimer. Interacts (via C-terminus) with GET1. Interacts (via N-terminus) with GET3. GET3 shows a higher affinity for CAMLG than for GET1. Interacts (via N-terminus) with TNFRSF13B/TACI (via C-terminus). In terms of tissue distribution, in the central nervous system, expressed in astrocytes, microglia and neurons (at protein level).

Its subcellular location is the endoplasmic reticulum membrane. Required for the post-translational delivery of tail-anchored (TA) proteins to the endoplasmic reticulum. Together with GET1/WRB, acts as a membrane receptor for soluble GET3/TRC40, which recognizes and selectively binds the transmembrane domain of TA proteins in the cytosol. Required for the stability of GET1. Stimulates calcium signaling in T cells through its involvement in elevation of intracellular calcium. Essential for the survival of peripheral follicular B cells. This Rattus norvegicus (Rat) protein is Guided entry of tail-anchored proteins factor CAMLG.